A 195-amino-acid chain; its full sequence is Recombination protein RecR (195 aa).

Residues 53–68 (CTICHNLDTISPCSIC) form a C4-type zinc finger. The 96-residue stretch at 76–171 (SIICVVEELG…KVTRLACGIP (96 aa)) folds into the Toprim domain.

Belongs to the RecR family.

Its function is as follows. May play a role in DNA repair. It seems to be involved in an RecBC-independent recombinational process of DNA repair. It may act with RecF and RecO. In Anaplasma marginale (strain St. Maries), this protein is Recombination protein RecR.